A 185-amino-acid polypeptide reads, in one-letter code: Elongation factor P (185 aa).

It belongs to the elongation factor P family.

The protein resides in the cytoplasm. The protein operates within protein biosynthesis; polypeptide chain elongation. Its function is as follows. Involved in peptide bond synthesis. Stimulates efficient translation and peptide-bond synthesis on native or reconstituted 70S ribosomes in vitro. Probably functions indirectly by altering the affinity of the ribosome for aminoacyl-tRNA, thus increasing their reactivity as acceptors for peptidyl transferase. The protein is Elongation factor P of Tropheryma whipplei (strain TW08/27) (Whipple's bacillus).